Consider the following 444-residue polypeptide: Enolase (444 aa).

Substrate-binding residues include histidine 163 and glutamate 172. Catalysis depends on glutamate 215, which acts as the Proton donor. Mg(2+) is bound by residues aspartate 250, glutamate 300, and aspartate 327. The substrate site is built by glutamate 300 and aspartate 327. The Proton acceptor role is filled by lysine 352. Substrate-binding positions include 379–382 (SHRS) and lysine 403.

The protein belongs to the enolase family. As to quaternary structure, homodimer. Requires Mg(2+) as cofactor.

It localises to the cytoplasm. It carries out the reaction (2R)-2-phosphoglycerate = phosphoenolpyruvate + H2O. It participates in carbohydrate degradation; glycolysis; pyruvate from D-glyceraldehyde 3-phosphate: step 4/5. In Mesembryanthemum crystallinum (Common ice plant), this protein is Enolase (PGH1).